Here is a 1351-residue protein sequence, read N- to C-terminus: Transcriptional regulator ovo (1351 aa).

Residues 1-31 form a required for Ubr3 binding and tal-dependent proteolytic processing region; the sequence is MPKIFLIKNRLHQQQQRLLESQNLLQHKNQD. 10 disordered regions span residues 22–77, 100–119, 184–397, 447–554, 640–665, 778–807, 834–887, 916–1000, 1023–1044, and 1113–1192; these read QNLL…SDQQ, LDHL…NPNQ, NSPI…SDEE, AGHG…HFNA, SNSK…GQTS, DDEE…PVEQ, GSNQ…YQHA, LLSQ…PSPT, PMSS…GSSN, and SKHG…DSSS. Pro residues predominate over residues 49–60; sequence SPTPTSQPPPEP. Composition is skewed to low complexity over residues 61–72 and 104–119; these read QGQGQQVLGQVP and NQNQ…NPNQ. Residues 205 to 232 are compositionally biased toward basic and acidic residues; sequence EKEKPAEREREKSDERTEQVEKEERVER. The span at 233 to 242 shows a compositional bias: acidic residues; the sequence is EEEEDDEVDV. The span at 262-272 shows a compositional bias: basic and acidic residues; it reads QRKEYPQEPKD. The span at 324–340 shows a compositional bias: pro residues; sequence TPPPADQRPSPPPPRDP. Over residues 447–486 the composition is skewed to low complexity; that stretch reads AGHGRNSSSSSGAAGQGFQSSGFGSQNSGSGSSSGNQNAG. The span at 487 to 505 shows a compositional bias: gly residues; that stretch reads SGAGSPGSGAGGGGGMGGG. Residues 530-552 are compositionally biased toward polar residues; it reads KSGQQSTASNNTGQSPGANHSHF. Residues 644 to 653 are compositionally biased toward basic residues; sequence FHNHHHHHQH. Residues 793–807 are compositionally biased toward polar residues; that stretch reads STPSLTPDSVTPVEQ. Composition is skewed to low complexity over residues 835–878, 916–962, 970–979, 1025–1044, and 1121–1175; these read SNQQ…HVQQ, LLSQ…QQQQ, QQQQQPQPQS, SSSS…GSSN, and HQQQ…HGSA. 4 C2H2-type zinc fingers span residues 1197–1219, 1225–1247, 1253–1276, and 1292–1315; these read FVCR…MKCH, YLCT…TRTH, YKCN…QKVH, and YVCE…KNNH.

In terms of assembly, interacts (via N-terminus) with Ubr3; the interaction is mediated by tal. N-terminus is proteolytically cleaved and ubiquitinated via a tal-dependent mechanism, leading to the proteolytic degradation of the N-terminus and the production of transcriptional activator shavenbaby, a truncated form with transcriptional activator activity.

It localises to the cytoplasm. The protein localises to the nucleus. It is found in the nucleoplasm. Functionally, transcriptional regulator with essential functions in the germline and soma. Plays an essential role in regulating the formation of apical cell extensions such as denticles and aristae, and initiating cytoskeletal remodeling during epidermal differentiation. Transcriptional repressor which functions in postembryonic development. The full-length unprocessed form acts as a transcriptional repressor (Transcriptional repressor svb). In terms of biological role, transcriptional activator which initiates trichome development and also promotes tarsal joint development. Has an essential somatic role regulating the tal-dependent formation of trichomes, and initiating cytoskeletal remodeling during epidermal differentiation. Function with SoxN is required for correct denticle morphogenesis on the embryonic epidermis. SoxN and svb appear to act both independently and in conjunction with each other to activate certain genes involved in denticle morphogenesis; Svb appears to be involved in regulating denticle length whereas SoxN regulates the denticle base circumference. Also functions in the development of other apical cell extensions such as bristles. Also has an important role in tarsal joint development, repressing expression of the N ligand Dl and defining its signaling boundary. Its function is as follows. Transcriptional repressor which is specifically involved in female germline development, where it functions antagonistically to isoform D. Negatively regulates expression of otu and may also have autoregulatory activity. Negatively regulates expression of piwi in the primordial germ cells (PGCs). Functionally, transcriptional activator which is specifically involved in female germline development, where it functions antagonistically to isoform C. Necessary and sufficient for normal oogenesis. Required in the primordial germ cells (PGCs) for normal development of male and female germline cells. Plays a role in germline sex determination. Binds the promoter DNA and positively regulates the transcription of the otu gene in a stage-specific manner. May have autoregulatory activity. In Drosophila melanogaster (Fruit fly), this protein is Transcriptional regulator ovo.